An 865-amino-acid polypeptide reads, in one-letter code: Nitrogen regulatory protein nrfA (865 aa).

5 disordered regions span residues M1–Q75, R115–I140, F177–R227, G557–S605, and L617–T663. Residues D32–S46 show a composition bias toward low complexity. 2 stretches are compositionally biased toward basic and acidic residues: residues R115–Q126 and P180–A189. The segment covering A582–Q592 has biased composition (polar residues). A GATA-type zinc finger spans residues C665–C689. The segment at N713–A854 is disordered. 2 stretches are compositionally biased toward polar residues: residues S715 to T724 and I737 to L764. 2 stretches are compositionally biased toward low complexity: residues P771–A786 and P830–A844.

It localises to the nucleus. Functionally, major nitrogen regulatory protein. In Penicillium urticae, this protein is Nitrogen regulatory protein nrfA (nrfA).